The primary structure comprises 111 residues: Ribosome-binding factor A (111 aa).

Belongs to the RbfA family. In terms of assembly, monomer. Binds 30S ribosomal subunits, but not 50S ribosomal subunits or 70S ribosomes.

It is found in the cytoplasm. Its function is as follows. One of several proteins that assist in the late maturation steps of the functional core of the 30S ribosomal subunit. Associates with free 30S ribosomal subunits (but not with 30S subunits that are part of 70S ribosomes or polysomes). Required for efficient processing of 16S rRNA. May interact with the 5'-terminal helix region of 16S rRNA. The polypeptide is Ribosome-binding factor A (Helicobacter pylori (strain J99 / ATCC 700824) (Campylobacter pylori J99)).